Reading from the N-terminus, the 76-residue chain is MSLAKPAMRGLLGKRLRFHLPIAFTLSLVAALGFKYGVTEPRKQAYADFYKQYDAVKDFNAMREAGIFESVRPSGE.

Residues 2-10 (SLAKPAMRG) are Mitochondrial matrix-facing. The helical transmembrane segment at 11-51 (LLGKRLRFHLPIAFTLSLVAALGFKYGVTEPRKQAYADFYK) threads the bilayer. The Mitochondrial intermembrane portion of the chain corresponds to 52–76 (QYDAVKDFNAMREAGIFESVRPSGE).

It belongs to the cytochrome c oxidase subunit 6c family. As to quaternary structure, component of the cytochrome c oxidase (complex IV, CIV), a multisubunit enzyme composed of 14 subunits. The complex is composed of a catalytic core of 3 subunits MT-CO1, MT-CO2 and MT-CO3, encoded in the mitochondrial DNA, and 11 supernumerary subunits COX4I, COX5A, COX5B, COX6A, COX6B, COX6C, COX7A, COX7B, COX7C, COX8 and NDUFA4, which are encoded in the nuclear genome. The complex exists as a monomer or a dimer and forms supercomplexes (SCs) in the inner mitochondrial membrane with NADH-ubiquinone oxidoreductase (complex I, CI) and ubiquinol-cytochrome c oxidoreductase (cytochrome b-c1 complex, complex III, CIII), resulting in different assemblies (supercomplex SCI(1)III(2)IV(1) and megacomplex MCI(2)III(2)IV(2)).

It localises to the mitochondrion inner membrane. The protein operates within energy metabolism; oxidative phosphorylation. Component of the cytochrome c oxidase, the last enzyme in the mitochondrial electron transport chain which drives oxidative phosphorylation. The respiratory chain contains 3 multisubunit complexes succinate dehydrogenase (complex II, CII), ubiquinol-cytochrome c oxidoreductase (cytochrome b-c1 complex, complex III, CIII) and cytochrome c oxidase (complex IV, CIV), that cooperate to transfer electrons derived from NADH and succinate to molecular oxygen, creating an electrochemical gradient over the inner membrane that drives transmembrane transport and the ATP synthase. Cytochrome c oxidase is the component of the respiratory chain that catalyzes the reduction of oxygen to water. Electrons originating from reduced cytochrome c in the intermembrane space (IMS) are transferred via the dinuclear copper A center (CU(A)) of subunit 2 and heme A of subunit 1 to the active site in subunit 1, a binuclear center (BNC) formed by heme A3 and copper B (CU(B)). The BNC reduces molecular oxygen to 2 water molecules using 4 electrons from cytochrome c in the IMS and 4 protons from the mitochondrial matrix. The chain is Cytochrome c oxidase subunit 6C-1 from Thunnus obesus (Bigeye tuna).